The primary structure comprises 86 residues: Small ribosomal subunit protein uS17 (86 aa).

This sequence belongs to the universal ribosomal protein uS17 family. Part of the 30S ribosomal subunit.

In terms of biological role, one of the primary rRNA binding proteins, it binds specifically to the 5'-end of 16S ribosomal RNA. This chain is Small ribosomal subunit protein uS17, found in Dehalococcoides mccartyi (strain ATCC BAA-2266 / KCTC 15142 / 195) (Dehalococcoides ethenogenes (strain 195)).